The chain runs to 208 residues: A-type ATP synthase subunit E (208 aa).

The protein belongs to the V-ATPase E subunit family. Has multiple subunits with at least A(3), B(3), C, D, E, F, H, I and proteolipid K(x).

Its subcellular location is the cell membrane. Functionally, component of the A-type ATP synthase that produces ATP from ADP in the presence of a proton gradient across the membrane. In Ignicoccus hospitalis (strain KIN4/I / DSM 18386 / JCM 14125), this protein is A-type ATP synthase subunit E.